A 426-amino-acid chain; its full sequence is MIDPQTLRDHPDLVIASQELRGASVEVVDQAVAADSERRRAVTEFEGLRAEQNAHGKLVAKADKADKPRLIAEVQELKARVTAAQERAQEAESALDEAMRRIPNIVIDGVPAGGEDDWALVREVGAKPSFDFAPRDHLEIGEILDAIDMGRGAKVSGARFHYLKGIGARLEIALMNFGLARALEAGLVPLITPTLVKPEIMAGTGFLGAHADEVYHLDDDDLYLTGTSEVALAGYHADEILDLAQGPIRYAGWSTCYRKEAGSYGKDTRGIIRVHQFQKLEMFSYVDPADAEAEHERLLAMQERMMQDLGLSYRVIDTAAGDLGSSAARKYDVEAWIPTQDAYRELTSTSNCTTFQARRLGTRFRGEDGRTSPVATLNGTLATTRWIVAILETHQQADGSVRVPEALRPYLGGLEVLEPAAAKAAR.

Residue 227–229 (TSE) participates in L-serine binding. ATP is bound by residues 258–260 (RKE) and valine 274. Glutamate 281 lines the L-serine pocket. Position 345–348 (345–348 (ELTS)) interacts with ATP. Threonine 380 contacts L-serine.

Belongs to the class-II aminoacyl-tRNA synthetase family. Type-1 seryl-tRNA synthetase subfamily. In terms of assembly, homodimer. The tRNA molecule binds across the dimer.

It localises to the cytoplasm. The catalysed reaction is tRNA(Ser) + L-serine + ATP = L-seryl-tRNA(Ser) + AMP + diphosphate + H(+). It carries out the reaction tRNA(Sec) + L-serine + ATP = L-seryl-tRNA(Sec) + AMP + diphosphate + H(+). It functions in the pathway aminoacyl-tRNA biosynthesis; selenocysteinyl-tRNA(Sec) biosynthesis; L-seryl-tRNA(Sec) from L-serine and tRNA(Sec): step 1/1. Its function is as follows. Catalyzes the attachment of serine to tRNA(Ser). Is also able to aminoacylate tRNA(Sec) with serine, to form the misacylated tRNA L-seryl-tRNA(Sec), which will be further converted into selenocysteinyl-tRNA(Sec). The sequence is that of Serine--tRNA ligase from Clavibacter michiganensis subsp. michiganensis (strain NCPPB 382).